Consider the following 654-residue polypeptide: DNA ligase (654 aa).

Residues 37–41, 86–87, and Glu-113 contribute to the NAD(+) site; these read DEEYD and SM. Catalysis depends on Lys-115, which acts as the N6-AMP-lysine intermediate. Residues Arg-136, Glu-170, and Lys-308 each coordinate NAD(+). 4 residues coordinate Zn(2+): Cys-402, Cys-405, Cys-418, and Cys-423. The 79-residue stretch at 576 to 654 folds into the BRCT domain; sequence ITQNAFSGKS…GEFERLKLEI (79 aa).

Belongs to the NAD-dependent DNA ligase family. LigA subfamily. The cofactor is Mg(2+). Mn(2+) serves as cofactor.

The enzyme catalyses NAD(+) + (deoxyribonucleotide)n-3'-hydroxyl + 5'-phospho-(deoxyribonucleotide)m = (deoxyribonucleotide)n+m + AMP + beta-nicotinamide D-nucleotide.. In terms of biological role, DNA ligase that catalyzes the formation of phosphodiester linkages between 5'-phosphoryl and 3'-hydroxyl groups in double-stranded DNA using NAD as a coenzyme and as the energy source for the reaction. It is essential for DNA replication and repair of damaged DNA. The polypeptide is DNA ligase (Campylobacter curvus (strain 525.92)).